The primary structure comprises 347 residues: Phenylalanine--tRNA ligase alpha subunit (347 aa).

Glutamate 268 is a Mg(2+) binding site.

This sequence belongs to the class-II aminoacyl-tRNA synthetase family. Phe-tRNA synthetase alpha subunit type 1 subfamily. Tetramer of two alpha and two beta subunits. Mg(2+) serves as cofactor.

Its subcellular location is the cytoplasm. It catalyses the reaction tRNA(Phe) + L-phenylalanine + ATP = L-phenylalanyl-tRNA(Phe) + AMP + diphosphate + H(+). The polypeptide is Phenylalanine--tRNA ligase alpha subunit (Leptothrix cholodnii (strain ATCC 51168 / LMG 8142 / SP-6) (Leptothrix discophora (strain SP-6))).